Reading from the N-terminus, the 407-residue chain is Inhibin beta B chain (407 aa).

Residues 1-28 form the signal peptide; the sequence is MDGLPGRALGAACLLLLAAGWLGPEAWG. Positions 27 to 60 are disordered; that stretch reads WGSPTPPPSPAAPPPPPPPGALGGSQDTCTSCGG. Residues 29-292 constitute a propeptide that is removed on maturation; the sequence is SPTPPPSPAA…VDSRHRIRKR (264 aa). Residues 30 to 46 show a composition bias toward pro residues; that stretch reads PTPPPSPAAPPPPPPPG. N-linked (GlcNAc...) asparagine glycosylation is present at asparagine 93. 4 disulfide bridges follow: cysteine 296-cysteine 304, cysteine 303-cysteine 372, cysteine 332-cysteine 404, and cysteine 336-cysteine 406.

Belongs to the TGF-beta family. In terms of assembly, dimeric, linked by one or more disulfide bonds. Inhibin B is a dimer of alpha and beta-B. Activin B is a homodimer of beta-B. Activin AB is a dimer of beta-A and beta-B. Interacts with FST and FSTL3.

The protein resides in the secreted. Its function is as follows. Inhibins and activins inhibit and activate, respectively, the secretion of follitropin by the pituitary gland. Inhibins/activins are involved in regulating a number of diverse functions such as hypothalamic and pituitary hormone secretion, gonadal hormone secretion, germ cell development and maturation, erythroid differentiation, insulin secretion, nerve cell survival, embryonic axial development or bone growth, depending on their subunit composition. Inhibins appear to oppose the functions of activins. In terms of biological role, activin B is a dimer of alpha and beta-B that plays a role in several essential biological processes including embryonic development, stem cell maintenance and differentiation, haematopoiesis, cell proliferation and wound healing. Signals through type I receptor ACVR1C, abundantly expressed in pancreatic beta cells, and type II receptors like ACVR2A. Upon ligand binding, these receptors phosphorylate intracellular signaling mediators SMAD2 and SMAD3, which form a complex with SMAD4, translocate to the nucleus, and regulate gene expression. Plays a crucial role in the induction of hepcidin by inflammation through activation of ACVR1C and subsequent phosphorylation of SMAD1/5/8. Regulates adipocyte lipid metabolism by decreasing non-esterified fatty acids and glycerol release and increases intracellular triglyceride content. Stimulates wound healing by promoting cell migration and hair follicle regeneration through the JNK and ERK signaling pathways downstream of RHOA. Functionally, inhibin B is a dimer of alpha and beta-B that plays a crucial role in the regulation of the reproductive system by inhibiting the secretion of follicle-stimulating hormone (FSH) from the anterior pituitary gland. Thereby, maintains reproductive homeostasis in both males and females. Acts as a more potent suppressor of FSH release than inhibin A. Functions as competitive receptor antagonist binding activin type II receptors with high affinity in the presence of the TGF-beta type III coreceptor/TGFBR3L. The protein is Inhibin beta B chain (INHBB) of Sus scrofa (Pig).